The primary structure comprises 454 residues: Tyrosine aminotransferase (454 aa).

An N-acetylmethionine modification is found at methionine 1. Residue lysine 280 is modified to N6-(pyridoxal phosphate)lysine. Serine 448 carries the phosphoserine modification.

Belongs to the class-I pyridoxal-phosphate-dependent aminotransferase family. As to quaternary structure, homodimer. The cofactor is pyridoxal 5'-phosphate.

The catalysed reaction is L-tyrosine + 2-oxoglutarate = 3-(4-hydroxyphenyl)pyruvate + L-glutamate. It functions in the pathway amino-acid degradation; L-phenylalanine degradation; acetoacetate and fumarate from L-phenylalanine: step 2/6. Functionally, transaminase involved in tyrosine breakdown. Converts tyrosine to p-hydroxyphenylpyruvate. Can catalyze the reverse reaction, using glutamic acid, with 2-oxoglutarate as cosubstrate (in vitro). Has much lower affinity and transaminase activity for phenylalanine. This is Tyrosine aminotransferase (Tat) from Mus musculus (Mouse).